Reading from the N-terminus, the 153-residue chain is Nucleoside diphosphate kinase (153 aa).

Residues Lys11, Phe59, Arg87, Thr93, Arg104, and Asn114 each contribute to the ATP site. Residue His117 is the Pros-phosphohistidine intermediate of the active site.

It belongs to the NDK family. Requires Mg(2+) as cofactor.

It catalyses the reaction a 2'-deoxyribonucleoside 5'-diphosphate + ATP = a 2'-deoxyribonucleoside 5'-triphosphate + ADP. The catalysed reaction is a ribonucleoside 5'-diphosphate + ATP = a ribonucleoside 5'-triphosphate + ADP. Its function is as follows. Major role in the synthesis of nucleoside triphosphates other than ATP. The ATP gamma phosphate is transferred to the NDP beta phosphate via a ping-pong mechanism, using a phosphorylated active-site intermediate. The polypeptide is Nucleoside diphosphate kinase (swoH) (Emericella nidulans (strain FGSC A4 / ATCC 38163 / CBS 112.46 / NRRL 194 / M139) (Aspergillus nidulans)).